The sequence spans 595 residues: O-phosphoseryl-tRNA(Sec) selenium transferase (595 aa).

Pyridoxal 5'-phosphate is bound at residue R75. Residues 96–106 form a phosphate loop (P-loop) region; sequence GRSGDLFSEQP. Substrate-binding residues include R97, S98, and Q105. Positions 174-187 are enriched in polar residues; it reads RTVTKDSTSATSAA. Disordered regions lie at residues 174–208 and 257–278; these read RTVT…TSLP and STNR…TPTS. Over residues 196–205 the composition is skewed to basic and acidic residues; that stretch reads EADRDRHDRT. R358 contacts tRNA. K371 is subject to N6-(pyridoxal phosphate)lysine. R400 contacts substrate.

This sequence belongs to the SepSecS family. As to quaternary structure, homotetramer composed of two homodimers. It depends on pyridoxal 5'-phosphate as a cofactor.

It is found in the cytoplasm. It catalyses the reaction O-phospho-L-seryl-tRNA(Sec) + selenophosphate + H2O = L-selenocysteinyl-tRNA(Sec) + 2 phosphate. It participates in aminoacyl-tRNA biosynthesis; selenocysteinyl-tRNA(Sec) biosynthesis; selenocysteinyl-tRNA(Sec) from L-seryl-tRNA(Sec) (archaeal/eukaryal route): step 2/2. Converts O-phosphoseryl-tRNA(Sec) to selenocysteinyl-tRNA(Sec) required for selenoprotein biosynthesis. This is O-phosphoseryl-tRNA(Sec) selenium transferase from Leishmania donovani.